The sequence spans 167 residues: Translationally-controlled tumor protein homolog (167 aa).

A TCTP domain is found at 1-167; it reads MIIYTDIISG…WKHGVKAEKI (167 aa).

This sequence belongs to the TCTP family.

It is found in the cytoplasm. It localises to the cytoskeleton. Functionally, involved in protein synthesis. Involved in microtubule stabilization. The sequence is that of Translationally-controlled tumor protein homolog from Kluyveromyces lactis (strain ATCC 8585 / CBS 2359 / DSM 70799 / NBRC 1267 / NRRL Y-1140 / WM37) (Yeast).